Here is a 485-residue protein sequence, read N- to C-terminus: MQWEVVIGLETHAQLSTASKIFSGTSTAFGAEANTQASPVDLALPGVLPVLNQGAVERAIQFGLAIGATIAPRSIFARKNYFYPDLPKGYQISQYEIPVVQGGTITIQVEGRKGEFYEKTVNLTRAHLEEDAGKSLHEDFAGMTGIDLNRAGTPLLEIVTEPDMRSAAEAVAYAKALHSLVVWLGICDGNMQEGSFRCDANVSVRPVGQKEFGTRREIKNLNSFRFLQQAIEYEVQWQIAEIEDGRKIQQATVLFDPDTGETRAMRTKEDAHDYRYFPDPDLMPLEIEPAWVERVRDALPELPAAMQARFVSQYGLSAYDATTLTATKAFAAYYEAVVADAGAANAKPAANWLMGDVSSQLNREGIAIDDAPVRPAQLAKLLARIADGTVSNNTAKKDVFPAMWAGEHDGDADAIIAAKGLKQMSDSGELEKIIDDVLAANAKSVEEFRSGKEKAFNALVGQAMKATRGKANPAQVNELLRKKLG.

The protein belongs to the GatB/GatE family. GatB subfamily. In terms of assembly, heterotrimer of A, B and C subunits.

The catalysed reaction is L-glutamyl-tRNA(Gln) + L-glutamine + ATP + H2O = L-glutaminyl-tRNA(Gln) + L-glutamate + ADP + phosphate + H(+). It catalyses the reaction L-aspartyl-tRNA(Asn) + L-glutamine + ATP + H2O = L-asparaginyl-tRNA(Asn) + L-glutamate + ADP + phosphate + 2 H(+). Functionally, allows the formation of correctly charged Asn-tRNA(Asn) or Gln-tRNA(Gln) through the transamidation of misacylated Asp-tRNA(Asn) or Glu-tRNA(Gln) in organisms which lack either or both of asparaginyl-tRNA or glutaminyl-tRNA synthetases. The reaction takes place in the presence of glutamine and ATP through an activated phospho-Asp-tRNA(Asn) or phospho-Glu-tRNA(Gln). The polypeptide is Aspartyl/glutamyl-tRNA(Asn/Gln) amidotransferase subunit B (Cupriavidus taiwanensis (strain DSM 17343 / BCRC 17206 / CCUG 44338 / CIP 107171 / LMG 19424 / R1) (Ralstonia taiwanensis (strain LMG 19424))).